The primary structure comprises 274 residues: Thiamine kinase (274 aa).

Belongs to the thiamine kinase family.

It carries out the reaction thiamine + ATP = thiamine phosphate + ADP + H(+). The protein operates within cofactor biosynthesis; thiamine diphosphate biosynthesis; thiamine phosphate from thiamine: step 1/1. Functionally, catalyzes the ATP-dependent phosphorylation of thiamine to thiamine phosphate. Is involved in thiamine salvage. The sequence is that of Thiamine kinase from Shigella flexneri serotype 5b (strain 8401).